The sequence spans 70 residues: MIGRLIILLARAWQMGPSLVLPPTCRYVPSCSAYTIEAVSRYGALKGGWLGFRRICRCHPWGGSGFDPVP.

The protein belongs to the UPF0161 family.

Its subcellular location is the cell inner membrane. In terms of biological role, could be involved in insertion of integral membrane proteins into the membrane. This Rhizorhabdus wittichii (strain DSM 6014 / CCUG 31198 / JCM 15750 / NBRC 105917 / EY 4224 / RW1) (Sphingomonas wittichii) protein is Putative membrane protein insertion efficiency factor.